The primary structure comprises 121 residues: Griffithsin (121 aa).

Residues 1 to 120 (SLTHRKFGGS…LDSLDIYYEQ (120 aa)) enclose the Jacalin-type lectin domain.

In terms of biological role, mixed specificity lectin with anti-HIV activity. Binds to HIV envelope glycoproteins, including exterior membrane glycoprotein gp120, and inhibits viral entry into cells. Binding to gp120 is dependent on gp120 being glycosylated, and is inhibited by mannose, glucose and N-acetylglucosamine. This is Griffithsin from Griffithsia sp. (strain Q66D336) (Red alga).